The primary structure comprises 457 residues: Serine/threonine-protein phosphatase 2A activator 2 (457 aa).

2 disordered regions span residues 387-407 (DAHG…GEGQ) and 426-457 (AEQE…IPFD). The span at 391 to 400 (HIHPAGKPHA) shows a compositional bias: basic residues.

It belongs to the PTPA-type PPIase family.

It is found in the cytoplasm. It carries out the reaction [protein]-peptidylproline (omega=180) = [protein]-peptidylproline (omega=0). In terms of biological role, PPIases accelerate the folding of proteins. It catalyzes the cis-trans isomerization of proline imidic peptide bonds in oligopeptides. Acts as a regulatory subunit for PP2A-like phosphatases modulating their activity or substrate specificity, probably by inducing a conformational change in the catalytic subunit, a direct target of the PPIase. Can reactivate inactive phosphatase PP2A-phosphatase methylesterase complexes (PP2Ai) in presence of ATP and Mg(2+) by dissociating the inactive form from the complex. This is Serine/threonine-protein phosphatase 2A activator 2 (RRD2) from Mycosarcoma maydis (Corn smut fungus).